A 209-amino-acid chain; its full sequence is Ribosome maturation factor RimM (209 aa).

The disordered stretch occupies residues 1-28; the sequence is MARRPQRPAPSGRAGAGRGAAGAAPPGP. A PRC barrel domain is found at 123 to 197; it reads EDEFFTADLV…RVTIAPPEDL (75 aa).

It belongs to the RimM family. In terms of assembly, binds ribosomal protein uS19.

It is found in the cytoplasm. Its function is as follows. An accessory protein needed during the final step in the assembly of 30S ribosomal subunit, possibly for assembly of the head region. Essential for efficient processing of 16S rRNA. May be needed both before and after RbfA during the maturation of 16S rRNA. It has affinity for free ribosomal 30S subunits but not for 70S ribosomes. This Methylobacterium sp. (strain 4-46) protein is Ribosome maturation factor RimM.